Consider the following 358-residue polypeptide: Magnesium-protoporphyrin IX monomethyl ester [oxidative] cyclase 3 (358 aa).

The protein belongs to the AcsF family. Requires Fe cation as cofactor.

It catalyses the reaction Mg-protoporphyrin IX 13-monomethyl ester + 3 NADPH + 3 O2 + 2 H(+) = 3,8-divinyl protochlorophyllide a + 3 NADP(+) + 5 H2O. It functions in the pathway porphyrin-containing compound metabolism; chlorophyll biosynthesis (light-independent). Catalyzes the formation of the isocyclic ring in chlorophyll biosynthesis. Mediates the cyclase reaction, which results in the formation of divinylprotochlorophyllide (Pchlide) characteristic of all chlorophylls from magnesium-protoporphyrin IX 13-monomethyl ester (MgPMME). The chain is Magnesium-protoporphyrin IX monomethyl ester [oxidative] cyclase 3 from Nostoc sp. (strain PCC 7120 / SAG 25.82 / UTEX 2576).